We begin with the raw amino-acid sequence, 492 residues long: MSCISSQCFITIKSICIVLLLSITCGAVSANSNYGEALTKSLLYFEAQRSGKLPLDQRVIWRGDSALRDGSDAHVDLTGGYYDAGDNMKFGFPLAFTTTMLAWSSVEMESQLKAHQEHGNTLAALRWATDYLIKAHPEPNVLYGQVGDANLDHACWMRPEDMTTPRPSYRIDPQHPGADLAGETAAAMAAASLAFAPSDSAYAKTLISHAKELFEFAKDYPGVYHNSIPNAGGFYPSSGYEDELLWAAAWLHRATGDQTYLDHLTQASNSGGARSVFAWDDKFLGAQVLVAKLVFEGKVKNEGKMIEYKSMAEQFICNCAQKGFNNVKKTPGGLLWFLPWDNLQYTATASFALATYAKYLEAAQTSIQCPNGDVLQASDLLNLARAQVDYILGSNPKKMSYMVGYGTNYPKRPHHRGASIVSIKNDPKPVTCNGGFEAWYNNPKPNPNLLVGAIVGGPDEYDAYGDERSDFQHGEPDTVTVAPLLGVLAAIA.

The signal sequence occupies residues 1 to 30 (MSCISSQCFITIKSICIVLLLSITCGAVSA). Residue Asp-86 is the Nucleophile of the active site. Catalysis depends on residues His-414, Asp-466, and Glu-475.

It belongs to the glycosyl hydrolase 9 (cellulase E) family.

It is found in the secreted. It carries out the reaction Endohydrolysis of (1-&gt;4)-beta-D-glucosidic linkages in cellulose, lichenin and cereal beta-D-glucans.. In Arabidopsis thaliana (Mouse-ear cress), this protein is Endoglucanase 15.